Reading from the N-terminus, the 447-residue chain is Sporulation protein YpeB (447 aa).

This sequence belongs to the YpeB family.

In terms of biological role, required for spore cortex hydrolysis during germination. Appears to be required for either expression, localization, activation or function of SleB. The protein is Sporulation protein YpeB of Oceanobacillus iheyensis (strain DSM 14371 / CIP 107618 / JCM 11309 / KCTC 3954 / HTE831).